We begin with the raw amino-acid sequence, 261 residues long: Kallikrein 1-related peptidase b5 (261 aa).

The signal sequence occupies residues 1 to 18 (MWFLILFLALSLGGIDAA). The propeptide at 19–24 (PPVQSR) is activation peptide. The Peptidase S1 domain occupies 25-258 (IFGGFNCEKN…FNSWIKDTIA (234 aa)). 5 disulfides stabilise this stretch: cysteine 31–cysteine 173, cysteine 50–cysteine 66, cysteine 152–cysteine 219, cysteine 184–cysteine 198, and cysteine 209–cysteine 234. Histidine 65 (charge relay system) is an active-site residue. N-linked (GlcNAc...) asparagine glycosylation is present at asparagine 102. Aspartate 120 acts as the Charge relay system in catalysis. The active-site Charge relay system is serine 213.

Belongs to the peptidase S1 family. Kallikrein subfamily.

It carries out the reaction Preferential cleavage of Arg-|-Xaa bonds in small molecule substrates. Highly selective action to release kallidin (lysyl-bradykinin) from kininogen involves hydrolysis of Met-|-Xaa or Leu-|-Xaa.. In terms of biological role, glandular kallikreins cleave Met-Lys and Arg-Ser bonds in kininogen to release Lys-bradykinin. This is Kallikrein 1-related peptidase b5 (Klk1b5) from Mus musculus (Mouse).